A 370-amino-acid chain; its full sequence is 3-isopropylmalate dehydrogenase 1 (370 aa).

Substrate contacts are provided by Arg98, Arg108, Arg136, and Asp227. Mg(2+) is bound by residues Asp227, Asp251, and Asp255. Position 289 to 301 (289 to 301) interacts with NAD(+); the sequence is GSAPDIAGQGIAN.

This sequence belongs to the isocitrate and isopropylmalate dehydrogenases family. LeuB type 1 subfamily. In terms of assembly, homodimer. Mg(2+) is required as a cofactor. Requires Mn(2+) as cofactor.

It is found in the cytoplasm. The catalysed reaction is (2R,3S)-3-isopropylmalate + NAD(+) = 4-methyl-2-oxopentanoate + CO2 + NADH. The protein operates within amino-acid biosynthesis; L-leucine biosynthesis; L-leucine from 3-methyl-2-oxobutanoate: step 3/4. Catalyzes the oxidation of 3-carboxy-2-hydroxy-4-methylpentanoate (3-isopropylmalate) to 3-carboxy-4-methyl-2-oxopentanoate. The product decarboxylates to 4-methyl-2 oxopentanoate. The polypeptide is 3-isopropylmalate dehydrogenase 1 (Bordetella bronchiseptica (strain ATCC BAA-588 / NCTC 13252 / RB50) (Alcaligenes bronchisepticus)).